A 524-amino-acid polypeptide reads, in one-letter code: MIKQALLSVSDKTGIVDFARELNALGVTLLSTGGTAKLLADSGLPVTEVADYTGFPEMLDGRVKTLHPKVHGGILARRDLPEHMAALAEHDIPTIDLLVVNLYPFQQTVAKDDCTLPDAIENIDIGGPTMLRSAAKNHRDVTVIVDPADYAVVLDEMRANANSVGYDTNFRLATKVFAHTAQYDGAITNYLTSLGADKSHQGRSAYPQTLNLAFDKVQEMRYGENPHQSAAFYRDLRAVDGALANYVQLQGKELSYNNIADADAAWECVKSFDAASGAACVIIKHANPCGVALGANALEAYDKAFKTDSTSAFGGIIAFNVELDETAAQAVARQFVEVLIAPSFSAGARAVFAAKQNVRLLEIPLGQGINQYDFKRVGGGLLVQSPDARNVQPSELRVVTRRHPNPKEMDDLMFAWRVAKFVKSNAIVFCGGGMTLGVGAGQMSRVDSARIASIKAQNAGLTLAGSAVASDAFFPFRDGLDVVVDAGATCVIQPGGSMRDDEVIAAADERGIAMVVTGTRHFRH.

In terms of domain architecture, MGS-like spans 1-145 (MIKQALLSVS…KNHRDVTVIV (145 aa)).

Belongs to the PurH family.

The catalysed reaction is (6R)-10-formyltetrahydrofolate + 5-amino-1-(5-phospho-beta-D-ribosyl)imidazole-4-carboxamide = 5-formamido-1-(5-phospho-D-ribosyl)imidazole-4-carboxamide + (6S)-5,6,7,8-tetrahydrofolate. The enzyme catalyses IMP + H2O = 5-formamido-1-(5-phospho-D-ribosyl)imidazole-4-carboxamide. It participates in purine metabolism; IMP biosynthesis via de novo pathway; 5-formamido-1-(5-phospho-D-ribosyl)imidazole-4-carboxamide from 5-amino-1-(5-phospho-D-ribosyl)imidazole-4-carboxamide (10-formyl THF route): step 1/1. Its pathway is purine metabolism; IMP biosynthesis via de novo pathway; IMP from 5-formamido-1-(5-phospho-D-ribosyl)imidazole-4-carboxamide: step 1/1. The polypeptide is Bifunctional purine biosynthesis protein PurH (Cupriavidus necator (strain ATCC 17699 / DSM 428 / KCTC 22496 / NCIMB 10442 / H16 / Stanier 337) (Ralstonia eutropha)).